We begin with the raw amino-acid sequence, 366 residues long: Flagellar P-ring protein (366 aa).

Residues 1–27 form the signal peptide; the sequence is MKSKYSIFCMFLLRGFIFLGTVFSLNS.

Belongs to the FlgI family. The basal body constitutes a major portion of the flagellar organelle and consists of four rings (L,P,S, and M) mounted on a central rod.

The protein localises to the periplasm. It localises to the bacterial flagellum basal body. In terms of biological role, assembles around the rod to form the L-ring and probably protects the motor/basal body from shearing forces during rotation. This Leptospira interrogans serogroup Icterohaemorrhagiae serovar copenhageni (strain Fiocruz L1-130) protein is Flagellar P-ring protein.